The following is a 90-amino-acid chain: Small ribosomal subunit protein bS20 (90 aa).

The protein belongs to the bacterial ribosomal protein bS20 family.

Functionally, binds directly to 16S ribosomal RNA. This Rickettsia felis (strain ATCC VR-1525 / URRWXCal2) (Rickettsia azadi) protein is Small ribosomal subunit protein bS20.